We begin with the raw amino-acid sequence, 291 residues long: RPE-retinal G protein-coupled receptor (291 aa).

Over methionine 1–glutamate 15 the chain is Extracellular. The chain crosses the membrane as a helical span at residues valine 16 to leucine 36. The Cytoplasmic portion of the chain corresponds to threonine 37–histidine 52. Residues leucine 53–alanine 73 traverse the membrane as a helical segment. Residues threonine 74 to histidine 91 are Extracellular-facing. Cysteine 88 and cysteine 162 are disulfide-bonded. A helical membrane pass occupies residues glycine 92–glycine 112. The Cytoplasmic portion of the chain corresponds to arginine 113–serine 130. Residues leucine 131–glycine 151 form a helical membrane-spanning segment. At histidine 152 to serine 175 the chain is on the extracellular side. An N-linked (GlcNAc...) asparagine glycan is attached at asparagine 172. A helical transmembrane segment spans residues phenylalanine 176–tyrosine 196. At arginine 197 to threonine 219 the chain is on the cytoplasmic side. Residues leucine 220–threonine 240 traverse the membrane as a helical segment. The Extracellular portion of the chain corresponds to serine 241–glutamine 247. A helical membrane pass occupies residues methionine 248–glycine 268. Position 255 is an N6-(retinylidene)lysine (lysine 255). Over serine 269–glutamine 291 the chain is Cytoplasmic.

This sequence belongs to the G-protein coupled receptor 1 family. Opsin subfamily. Post-translationally, covalently binds all-trans- and 11-cis-retinal. In terms of tissue distribution, preferentially expressed at high levels in the retinal pigment epithelium (RPE) and Mueller cells of the neural retina.

The protein resides in the membrane. Its function is as follows. Receptor for all-trans- and 11-cis-retinal. Binds preferentially to the former and may catalyze the isomerization of the chromophore by a retinochrome-like mechanism. The chain is RPE-retinal G protein-coupled receptor (RGR) from Bos taurus (Bovine).